A 580-amino-acid polypeptide reads, in one-letter code: Acyl-coenzyme A synthetase ACSM3, mitochondrial (580 aa).

The N-terminal 21 residues, 1 to 21, are a transit peptide targeting the mitochondrion; the sequence is MVMLLRARCFQRLAIPDPMRV. Residues Lys67 and Lys100 each carry the N6-succinyllysine modification. N6-acetyllysine is present on Lys151. Residues 229-237, 368-373, Asp455, Arg470, and Lys566 contribute to the ATP site; these read TSGTTGPPK and EGYGQT.

It belongs to the ATP-dependent AMP-binding enzyme family. The cofactor is Mg(2+). Mn(2+) is required as a cofactor. As to expression, detected in kidney (at protein level). Detected in kidney proximal tubules and in liver. Detected at low levels in testis, stomach, heart and lung.

The protein resides in the mitochondrion. The protein localises to the mitochondrion matrix. The enzyme catalyses a medium-chain fatty acid + ATP + CoA = a medium-chain fatty acyl-CoA + AMP + diphosphate. It carries out the reaction propanoate + ATP + CoA = propanoyl-CoA + AMP + diphosphate. The catalysed reaction is butanoate + ATP + CoA = butanoyl-CoA + AMP + diphosphate. It catalyses the reaction 2-methylpropanoate + ATP + CoA = 2-methylpropanoyl-CoA + AMP + diphosphate. The enzyme catalyses 2-methylbutanoate + ATP + CoA = 2-methylbutanoyl-CoA + AMP + diphosphate. It carries out the reaction octanoate + ATP + CoA = octanoyl-CoA + AMP + diphosphate. Its function is as follows. Catalyzes the activation of fatty acids by CoA to produce an acyl-CoA, the first step in fatty acid metabolism. Capable of activating medium-chain fatty acids with a preference for isobutyrate among fatty acids with 2-6 carbon atoms. This is Acyl-coenzyme A synthetase ACSM3, mitochondrial (Acsm3) from Mus musculus (Mouse).